We begin with the raw amino-acid sequence, 472 residues long: Transmembrane protein 8B (472 aa).

A disordered region spans residues 1 to 36 (MNMPQSLGNQPLPPEPPSLGTPAEGPGTTSPPEHCW). The Extracellular segment spans residues 1–233 (MNMPQSLGNQ…ADALTYGFQL (233 aa)). 2 N-linked (GlcNAc...) asparagine glycosylation sites follow: N92 and N100. The EGF-like domain maps to 182–221 (FLSPCVDDCGPYGQCKLLRTHNYLYAACECKAGWRGWGCT). Cystine bridges form between C186–C196, C190–C209, and C211–C220. Residues 234-254 (LSTLLLCLSNLMFLPPVVLAI) traverse the membrane as a helical segment. Over 255-257 (RSR) the chain is Cytoplasmic. The helical transmembrane segment at 258-277 (YVLEAAVYTFTMFFSTFYHA) threads the bilayer. Residues 278-292 (CDQPGIVVFCIMDYD) are Extracellular-facing. A helical membrane pass occupies residues 293-313 (VLQFCDFLGSLMSVWVTVIAM). Residues 314-315 (AR) lie on the Cytoplasmic side of the membrane. The chain crosses the membrane as a helical span at residues 316–336 (LQPVVKQVLYLLGAMLLSMAL). Over 337–342 (QLDRHG) the chain is Extracellular. Residues 343 to 363 (LWNLLGPSLFALGILATAWTV) form a helical membrane-spanning segment. At 364–379 (RSVRRRHCYPPTWRRW) the chain is on the cytoplasmic side. The chain crosses the membrane as a helical span at residues 380–400 (LFYLCPGSLIAGSAVLLYAFV). The Extracellular segment spans residues 401 to 405 (ETRDN). The chain crosses the membrane as a helical span at residues 406 to 426 (YFYIHSIWHMLIAGSVGFLLP). The Cytoplasmic portion of the chain corresponds to 427 to 472 (PRAKTDHGVPSGARARGCGYQLCINEQEELGLVGPGGATVSSICAS).

Belongs to the TMEM8 family. Isoform 2 (via its cytoplasmic part) interacts with EZR. In terms of processing, isoform 2 is N-glycosylated.

The protein localises to the cell membrane. Its subcellular location is the cytoplasm. It localises to the nucleus. The protein resides in the mitochondrion. It is found in the endoplasmic reticulum. Its function is as follows. May function as a regulator of the EGFR pathway. Probable tumor suppressor which may function in cell growth, proliferation and adhesion. In Homo sapiens (Human), this protein is Transmembrane protein 8B (TMEM8B).